The sequence spans 180 residues: NEDD8-conjugating enzyme ubc-12 (180 aa).

The 157-residue stretch at 24–180 folds into the UBC core domain; it reads VRDKLLAQEL…RVREYISRYC (157 aa). Residue Cys-112 is the Glycyl thioester intermediate of the active site.

The protein belongs to the ubiquitin-conjugating enzyme family. UBC12 subfamily.

Its subcellular location is the cytoplasm. The catalysed reaction is [E1 NEDD8-activating enzyme]-S-[NEDD8 protein]-yl-L-cysteine + [E2 NEDD8-conjugating enzyme]-L-cysteine = [E1 NEDD8-activating enzyme]-L-cysteine + [E2 NEDD8-conjugating enzyme]-S-[NEDD8-protein]-yl-L-cysteine.. It functions in the pathway protein modification; protein neddylation. Functionally, accepts the ubiquitin-like protein NEDD8 from the uba-3-ula-1 E1 complex and catalyzes its covalent attachment to other proteins. Plays a role in male tail tip morphogenesis. This chain is NEDD8-conjugating enzyme ubc-12, found in Caenorhabditis elegans.